The following is a 195-amino-acid chain: Capsid protein (195 aa).

The segment at 148 to 195 (NAPILSTLPETTVVRRRGRSPRRRTPSPRRRRSQSPRRRRSASPASQC) is disordered. A compositionally biased stretch (basic residues) spans 161–188 (VRRRGRSPRRRTPSPRRRRSQSPRRRRS). Phosphoserine; by host is present on residues Ser-167, Ser-174, and Ser-182. One copy of the 1; half-length repeat lies at 167-172 (SPRRRT). The tract at residues 167 to 188 (SPRRRTPSPRRRRSQSPRRRRS) is 3 X 7 AA repeats of S-P-R-R-R-[PR]-S. A Bipartite nuclear localization signal motif is present at residues 170 to 187 (RRTPSPRRRRSQSPRRRR). A run of 2 repeats spans residues 174–180 (SPRRRRS) and 182–188 (SPRRRRS). Residues 189–195 (ASPASQC) form an RNA binding region.

This sequence belongs to the orthohepadnavirus core antigen family. Homodimerizes, then multimerizes. Interacts with cytosol exposed regions of viral L glycoprotein present in the reticulum-to-Golgi compartment. Interacts with human FLNB. Phosphorylated form interacts with host importin alpha; this interaction depends on the exposure of the NLS, which itself depends upon genome maturation and/or phosphorylation of the capsid protein. Interacts with host NUP153. Post-translationally, phosphorylated by host SRPK1, SRPK2, and maybe protein kinase C or GAPDH. Phosphorylation is critical for pregenomic RNA packaging. Protein kinase C phosphorylation is stimulated by HBx protein and may play a role in transport of the viral genome to the nucleus at the late step during the viral replication cycle.

The protein resides in the virion. It is found in the host cytoplasm. Self assembles to form an icosahedral capsid. Most capsids appear to be large particles with an icosahedral symmetry of T=4 and consist of 240 copies of capsid protein, though a fraction forms smaller T=3 particles consisting of 180 capsid proteins. Entering capsids are transported along microtubules to the nucleus. Phosphorylation of the capsid is thought to induce exposure of nuclear localization signal in the C-terminal portion of the capsid protein that allows binding to the nuclear pore complex via the importin (karyopherin-) alpha and beta. Capsids are imported in intact form through the nuclear pore into the nuclear basket, where it probably binds NUP153. Only capsids that contain the mature viral genome can release the viral DNA and capsid protein into the nucleoplasm. Immature capsids get stuck in the basket. Capsids encapsulate the pre-genomic RNA and the P protein. Pre-genomic RNA is reverse-transcribed into DNA while the capsid is still in the cytoplasm. The capsid can then either be directed to the nucleus, providing more genomes for transcription, or bud through the endoplasmic reticulum to provide new virions. This chain is Capsid protein, found in Hepatitis B virus genotype G (isolate United States/USG17/2002) (HBV-G).